The chain runs to 586 residues: Solute carrier family 13 member 2 (586 aa).

The next 3 membrane-spanning stretches (helical) occupy residues 13-33 (SYLI…IVQT), 53-73 (ALPL…MGIM), and 86-106 (TNIL…WNLH). The segment covering 165-175 (DVEEGNSNPSF) has biased composition (polar residues). The segment at 165 to 209 (DVEEGNSNPSFELQEASPQKEETKLDNGQAVSVSSEPRAQKTKEH) is disordered. A run of 9 helical transmembrane segments spans residues 215–235 (GLSL…LTGT), 264–284 (FAFP…QVLF), 319–339 (PMSF…VLWF), 366–386 (GTVA…IPGL), 407–427 (TVND…FALA), 445–465 (PLQH…VAIF), 478–498 (FLPI…YVML), 506–526 (LAFM…FGGL), and 535–555 (GFLL…SWSI).

It belongs to the SLC13A/DASS transporter (TC 2.A.47) family. NADC subfamily. Highly expressed in kidney and small intestine. Not detectable in brain, heart, stomach and skeletal muscle.

The protein localises to the apical cell membrane. The enzyme catalyses succinate(out) + 3 Na(+)(out) = succinate(in) + 3 Na(+)(in). It carries out the reaction fumarate(out) + 3 Na(+)(out) = fumarate(in) + 3 Na(+)(in). It catalyses the reaction 2-oxoglutarate(out) + 3 Na(+)(out) = 2-oxoglutarate(in) + 3 Na(+)(in). With respect to regulation, li(+) decreases succinate transport in the presence of Na(+), by competing at one of the three cation binding sites. Functionally, low-affinity sodium-dicarboxylate cotransporter, that mediates the entry of citric acid cycle intermediates, such as succinate, citrate, fumarate and alpha-ketoglutarate (2-oxoglutarate) into the small intestine and renal proximal tubule. Can transport citrate in a Na(+)-dependent manner, recognizing the divalent form of citrate rather than the trivalent form which is normally found in blood. Transports the dicarboxylate into the cell with a probable stoichiometry of 3 Na(+) for 1 divalent dicarboxylate, rendering the process electrogenic. Has a critical role in renal dicarboxylate transport. The protein is Solute carrier family 13 member 2 (Slc13a2) of Mus musculus (Mouse).